Here is a 475-residue protein sequence, read N- to C-terminus: ATP-dependent protease ATPase subunit HslU1 (475 aa).

The N-terminal 27 residues, 1–27 (MMRRVTSSLPSALKLGRSLGPNVRFSG), are a transit peptide targeting the mitochondrion. Residues Ile66, 108–113 (GVGKTE), Asp286, Glu353, and Arg425 each bind ATP.

It belongs to the ClpX chaperone family. HslU subfamily. In terms of assembly, a double ring-shaped homohexamer of HslV is capped on each side by a ring-shaped HslU homohexamer. The assembly of the HslU/HslV complex (HslVU) is dependent on binding of ATP.

The protein resides in the mitochondrion matrix. Its subcellular location is the kinetoplast. ATPase subunit of a proteasome-like degradation complex; this subunit has chaperone activity. The binding of ATP and its subsequent hydrolysis by HslU are essential for unfolding of protein substrates subsequently hydrolyzed by HslV. HslU recognizes the N-terminal part of its protein substrates and unfolds these before they are guided to HslV for hydrolysis. The HslVU protease complex functions in mitochondrial DNA replication by regulating DNA helicase PIF2 protein levels. This Trypanosoma brucei brucei (strain 927/4 GUTat10.1) protein is ATP-dependent protease ATPase subunit HslU1 (HslU1).